The primary structure comprises 22 residues: Caerin-3.2 (22 aa).

The residue at position 22 (lysine 22) is a Lysine amide.

As to expression, expressed by the skin parotoid and/or rostral glands.

Its subcellular location is the secreted. In terms of biological role, antibacterial peptide, that adopts an alpha helical conformation which can disrupt bacterial membranes. Each caerin displays a different antimicrobial specificity. In Ranoidea caerulea (Green tree frog), this protein is Caerin-3.2.